The following is a 138-amino-acid chain: Microneme antigen L2 (138 aa).

PAN domains follow at residues 9 to 78 (CFAH…PRSC) and 82 to 138 (CSDA…SKRA). 6 disulfide bridges follow: Cys-9-Cys-78, Cys-34-Cys-56, Cys-38-Cys-44, Cys-82-Cys-86, Cys-107-Cys-127, and Cys-111-Cys-117. A carbohydrate is bound at residue Ser-18. A carbohydrate is bound by residues Lys-59, Tyr-66, and Asp-71.

As to quaternary structure, homodimer or heterodimer. In terms of processing, contains six disulfide bonds.

It is found in the cytoplasmic vesicle. It localises to the secretory vesicle. The protein resides in the microneme. Functionally, galactose-binding lectin. Plays a role in adhesion to the host cell. Has a potential role in invasion of host cells. In Sarcocystis muris, this protein is Microneme antigen L2.